Here is a 229-residue protein sequence, read N- to C-terminus: Probable U3 small nucleolar RNA-associated protein 11 (229 aa).

Disordered stretches follow at residues 1 to 23 (MSSLRNAIQRRAHKERAQPESRK) and 199 to 229 (KKPGRKRKLREDEIENQTSRPVYKWRAQRKR).

This sequence belongs to the UTP11 family. In terms of assembly, component of the ribosomal small subunit (SSU) processome.

The protein localises to the nucleus. The protein resides in the nucleolus. Functionally, involved in nucleolar processing of pre-18S ribosomal RNA. The protein is Probable U3 small nucleolar RNA-associated protein 11 of Oryza sativa subsp. japonica (Rice).